The sequence spans 507 residues: Cytochrome P450 3A28 (507 aa).

C442 is a binding site for heme.

The protein belongs to the cytochrome P450 family. Heme serves as cofactor.

Its subcellular location is the endoplasmic reticulum membrane. The protein localises to the microsome membrane. It catalyses the reaction an organic molecule + reduced [NADPH--hemoprotein reductase] + O2 = an alcohol + oxidized [NADPH--hemoprotein reductase] + H2O + H(+). Functionally, cytochromes P450 are a group of heme-thiolate monooxygenases. In liver microsomes, this enzyme is involved in an NADPH-dependent electron transport pathway. It oxidizes a variety of structurally unrelated compounds, including steroids, fatty acids, and xenobiotics. The chain is Cytochrome P450 3A28 (CYP3A28) from Bos taurus (Bovine).